We begin with the raw amino-acid sequence, 250 residues long: Kallikrein-14 (250 aa).

An N-terminal signal peptide occupies residues 1–18; that stretch reads MFLLLIILQALAVAIAQS. Positions 19–23 are cleaved as a propeptide — activation peptide; sequence QGDHK. The Peptidase S1 domain occupies 24-248; that stretch reads IIGGYRCVRN…YHSWIQRTMQ (225 aa). An intrachain disulfide couples C51 to C67. Active-site charge relay system residues include H66 and D110. 3 disulfides stabilise this stretch: C142–C209, C174–C188, and C199–C224. S203 (charge relay system) is an active-site residue.

This sequence belongs to the peptidase S1 family. Kallikrein subfamily. Proteolytic cleavage of the activation peptide produces the active enzyme.

The protein localises to the secreted. Its subcellular location is the extracellular space. Its activity is regulated as follows. Inhibited by SERPINA1, SERPINC1, SERPINE1, SERPINF2, aprotinin, soybean, trypsin inhibitor and leupeptin. Inhibited by serine protease inhibitor SPINK5. Has an autoproteolytic activity which may have a regulatory effect. Activated by citrate and inhibited by zinc and to a lower extent by manganese. Serine-type endopeptidase with a dual trypsin-like and chymotrypsin-like substrate specificity. May activate/inactivate the proteinase-activated receptors F2R, F2RL1 and F2RL3 and other kallikreins including KLK1, KLK3, KLK5 and KLK11. May function in seminal clot liquefaction through direct cleavage of the semenogelin SEMG1 and SEMG2 and activation of KLK3. May function through desmoglein DSG1 cleavage in epidermal desquamation a process by which the most superficial corneocytes are shed from the skin surface. May be involved in several aspects of tumor progression including growth, invasion and angiogenesis. The sequence is that of Kallikrein-14 (Klk14) from Mus musculus (Mouse).